The chain runs to 306 residues: UDP-N-acetylenolpyruvoylglucosamine reductase (306 aa).

The 166-residue stretch at 34-199 (KSGGAAEWLF…VAATFRGHAE (166 aa)) folds into the FAD-binding PCMH-type domain. R179 is a catalytic residue. The interval 215–234 (REASQPLRSRTGGSTFKNPQ) is disordered. Polar residues predominate over residues 220 to 232 (PLRSRTGGSTFKN). S228 acts as the Proton donor in catalysis. The active site involves E298.

Belongs to the MurB family. FAD serves as cofactor.

It is found in the cytoplasm. It carries out the reaction UDP-N-acetyl-alpha-D-muramate + NADP(+) = UDP-N-acetyl-3-O-(1-carboxyvinyl)-alpha-D-glucosamine + NADPH + H(+). It participates in cell wall biogenesis; peptidoglycan biosynthesis. Its function is as follows. Cell wall formation. The sequence is that of UDP-N-acetylenolpyruvoylglucosamine reductase from Rhizorhabdus wittichii (strain DSM 6014 / CCUG 31198 / JCM 15750 / NBRC 105917 / EY 4224 / RW1) (Sphingomonas wittichii).